A 607-amino-acid polypeptide reads, in one-letter code: COMPASS component cclA (607 aa).

The span at 1–19 (MASTHAAGSPAPSSSINSP) shows a compositional bias: low complexity. Disordered stretches follow at residues 1 to 22 (MAST…PILH) and 34 to 86 (GEGS…KSVA). Positions 57–69 (SKRNKRDSRKKRE) are enriched in basic residues. In terms of domain architecture, B30.2/SPRY spans 157-376 (IADTDFPHIK…YAFNLKETPA (220 aa)). Positions 587 to 607 (NTPITDVPVPPEPEDTPMTGG) are disordered.

This sequence belongs to the cclA family. As to quaternary structure, component of the COMPASS complex.

It localises to the nucleus. The protein localises to the chromosome. Its subcellular location is the telomere. Functionally, component of the COMPASS (Set1C) complex that specifically mono-, di- and trimethylates histone H3 to form H3K4me1/2/3, which subsequently plays a role in telomere length maintenance and transcription elongation regulation. Controls the production of several secondary metabolites, including monodictyphenone, emodin and emodin derivatives, as well as two anti-osteoporosis polyketides, F9775A and F9775B. In Emericella nidulans (strain FGSC A4 / ATCC 38163 / CBS 112.46 / NRRL 194 / M139) (Aspergillus nidulans), this protein is COMPASS component cclA.